An 88-amino-acid polypeptide reads, in one-letter code: UPF0250 protein Swoo_3713 (88 aa).

It belongs to the UPF0250 family.

The polypeptide is UPF0250 protein Swoo_3713 (Shewanella woodyi (strain ATCC 51908 / MS32)).